A 112-amino-acid chain; its full sequence is MGRDEMLRRSLVALAAAVVVTGVVTASVRKAAATYGFGILAIAGVLLPDWEFFDRDYSQWLTPMPASRRTAAEAAADREHDVWKFKPYPLRMAMLTTIYGFGLYKWWMYVSS.

The signal sequence occupies residues 1 to 25 (MGRDEMLRRSLVALAAAVVVTGVVT). The next 2 membrane-spanning stretches (helical) occupy residues 33–53 (ATYG…WEFF) and 92–112 (MAML…YVSS).

The protein belongs to the SPCS1 family.

The protein localises to the endoplasmic reticulum membrane. Functionally, functions in tapetum development during early meiosis. May play a role in the endoplasmic reticulum (ER) membrane in the early stages of tapetum development in anthers. Seems to function after MSP1 and before UDT1. This chain is Signal peptidase complex-like protein DTM1, found in Oryza sativa subsp. japonica (Rice).